A 137-amino-acid chain; its full sequence is Holo-[acyl-carrier-protein] synthase (137 aa).

Residues Asp8 and Glu58 each contribute to the Mg(2+) site.

The protein belongs to the P-Pant transferase superfamily. AcpS family. The cofactor is Mg(2+).

It localises to the cytoplasm. It carries out the reaction apo-[ACP] + CoA = holo-[ACP] + adenosine 3',5'-bisphosphate + H(+). Functionally, transfers the 4'-phosphopantetheine moiety from coenzyme A to a Ser of acyl-carrier-protein. The polypeptide is Holo-[acyl-carrier-protein] synthase (Lactobacillus delbrueckii subsp. bulgaricus (strain ATCC BAA-365 / Lb-18)).